Consider the following 250-residue polypeptide: HTH-type transcriptional regulator SarS (250 aa).

2 DNA-binding regions (H-T-H motif) span residues 53–76 and 177–200; these read FKKI…VLVK and LKDL…NLKK.

The protein belongs to the SarA family.

The protein localises to the cytoplasm. In terms of biological role, transcriptional regulator that controls expression of some virulence factors in a cell density-dependent manner. The polypeptide is HTH-type transcriptional regulator SarS (sarS) (Staphylococcus aureus (strain Mu3 / ATCC 700698)).